Consider the following 427-residue polypeptide: Sperm-associated antigen 1A (427 aa).

The tract at residues 46-113 (QKKGPGYREG…GPGSAGESCN (68 aa)) is disordered. 6 TPR repeats span residues 125-158 (LARL…CIEA), 167-200 (CVLY…HPFS), 202-234 (KPLL…DISV), 302-335 (FTIL…KPNE), 336-369 (CAIY…EPKN), and 371-403 (KAFY…DPNV).

It is found in the cytoplasm. It localises to the dynein axonemal particle. In terms of biological role, may play a role in the cytoplasmic assembly and/or trafficking of the axonemal dynein arms. The sequence is that of Sperm-associated antigen 1A (spag1a) from Danio rerio (Zebrafish).